A 210-amino-acid chain; its full sequence is Thymidylate kinase (210 aa).

10 to 17 (GLEGAGKT) serves as a coordination point for ATP.

Belongs to the thymidylate kinase family.

The enzyme catalyses dTMP + ATP = dTDP + ADP. Functionally, phosphorylation of dTMP to form dTDP in both de novo and salvage pathways of dTTP synthesis. This Erwinia tasmaniensis (strain DSM 17950 / CFBP 7177 / CIP 109463 / NCPPB 4357 / Et1/99) protein is Thymidylate kinase.